The chain runs to 303 residues: Phospholipase A1 2 (303 aa).

C6 and C90 are oxidised to a cystine. S140 (nucleophile) is an active-site residue. D168 functions as the Charge relay system in the catalytic mechanism. A disulfide bridge links C179 with C184. Catalysis depends on H232, which acts as the Charge relay system. Intrachain disulfides connect C247-C271, C248-C296, and C264-C269.

The protein belongs to the AB hydrolase superfamily. Lipase family. Expressed by the venom gland.

Its subcellular location is the secreted. It catalyses the reaction a 1,2-diacyl-sn-glycero-3-phosphocholine + H2O = a 2-acyl-sn-glycero-3-phosphocholine + a fatty acid + H(+). Functionally, catalyzes the hydrolysis of phosphatidylcholine with phospholipase A1 activity. May act as an allergen and induce hemolytic activity. This Dolichovespula maculata (Bald-faced hornet) protein is Phospholipase A1 2.